Reading from the N-terminus, the 260-residue chain is tRNA (guanine-N(7)-)-methyltransferase (260 aa).

Residues 1–37 are disordered; that stretch reads MIHDPNDAGLPDQLPTPSSEAENSPAGDTTPPEEALH. The S-adenosyl-L-methionine site is built by E90, E115, D142, and D165. D165 is an active-site residue. Substrate-binding positions include K169, D201, and 236-239; that span reads TKFE.

It belongs to the class I-like SAM-binding methyltransferase superfamily. TrmB family.

It carries out the reaction guanosine(46) in tRNA + S-adenosyl-L-methionine = N(7)-methylguanosine(46) in tRNA + S-adenosyl-L-homocysteine. It functions in the pathway tRNA modification; N(7)-methylguanine-tRNA biosynthesis. Functionally, catalyzes the formation of N(7)-methylguanine at position 46 (m7G46) in tRNA. This Paraburkholderia xenovorans (strain LB400) protein is tRNA (guanine-N(7)-)-methyltransferase.